Reading from the N-terminus, the 338-residue chain is Ribosomal RNA small subunit methyltransferase C (338 aa).

Belongs to the methyltransferase superfamily. RsmC family. In terms of assembly, monomer.

The protein resides in the cytoplasm. It catalyses the reaction guanosine(1207) in 16S rRNA + S-adenosyl-L-methionine = N(2)-methylguanosine(1207) in 16S rRNA + S-adenosyl-L-homocysteine + H(+). Its function is as follows. Specifically methylates the guanine in position 1207 of 16S rRNA in the 30S particle. This chain is Ribosomal RNA small subunit methyltransferase C, found in Acinetobacter baylyi (strain ATCC 33305 / BD413 / ADP1).